The sequence spans 317 residues: Transcriptional activator protein med (317 aa).

The N-terminal stretch at 1-17 is a signal peptide; that stretch reads MITRLVMIFSVLLLLSG. The N-palmitoyl cysteine moiety is linked to residue Cys-18. The S-diacylglycerol cysteine moiety is linked to residue Cys-18.

The protein belongs to the BMP lipoprotein family.

The protein resides in the cell membrane. Its function is as follows. Positive activator of the comK gene. The polypeptide is Transcriptional activator protein med (med) (Bacillus subtilis (strain 168)).